The sequence spans 160 residues: Large ribosomal subunit protein bL17 (160 aa).

Positions 123–141 are enriched in basic and acidic residues; sequence DEKRQKRAEARAKRREEMQ. The disordered stretch occupies residues 123–160; the sequence is DEKRQKRAEARAKRREEMQKAMAEQQQAEGGEPEGGNE. Residues 142-152 are compositionally biased toward low complexity; it reads KAMAEQQQAEG.

Belongs to the bacterial ribosomal protein bL17 family. In terms of assembly, part of the 50S ribosomal subunit. Contacts protein L32.

This chain is Large ribosomal subunit protein bL17, found in Acidobacterium capsulatum (strain ATCC 51196 / DSM 11244 / BCRC 80197 / JCM 7670 / NBRC 15755 / NCIMB 13165 / 161).